The primary structure comprises 321 residues: Glucokinase (321 aa).

Residue 9-14 (ADIGGT) coordinates ATP.

The protein belongs to the bacterial glucokinase family.

The protein localises to the cytoplasm. It catalyses the reaction D-glucose + ATP = D-glucose 6-phosphate + ADP + H(+). The sequence is that of Glucokinase from Saccharophagus degradans (strain 2-40 / ATCC 43961 / DSM 17024).